We begin with the raw amino-acid sequence, 367 residues long: tRNA/tmRNA (uracil-C(5))-methyltransferase (367 aa).

S-adenosyl-L-methionine-binding residues include glutamine 191, tyrosine 218, asparagine 223, glutamate 239, and aspartate 299. The Nucleophile role is filled by cysteine 324. Residue glutamate 358 is the Proton acceptor of the active site.

The protein belongs to the class I-like SAM-binding methyltransferase superfamily. RNA M5U methyltransferase family. TrmA subfamily.

It carries out the reaction uridine(54) in tRNA + S-adenosyl-L-methionine = 5-methyluridine(54) in tRNA + S-adenosyl-L-homocysteine + H(+). The enzyme catalyses uridine(341) in tmRNA + S-adenosyl-L-methionine = 5-methyluridine(341) in tmRNA + S-adenosyl-L-homocysteine + H(+). Functionally, dual-specificity methyltransferase that catalyzes the formation of 5-methyluridine at position 54 (m5U54) in all tRNAs, and that of position 341 (m5U341) in tmRNA (transfer-mRNA). This chain is tRNA/tmRNA (uracil-C(5))-methyltransferase, found in Campylobacter concisus (strain 13826).